The following is a 155-amino-acid chain: Anaerobic ribonucleoside-triphosphate reductase-activating protein (155 aa).

3 residues coordinate [4Fe-4S] cluster: cysteine 26, cysteine 30, and cysteine 33. Residues 32-34 (GCY) and glycine 74 each bind S-adenosyl-L-methionine.

This sequence belongs to the organic radical-activating enzymes family. Forms a tetramer composed of two NrdD and two NrdG subunits. It depends on [4Fe-4S] cluster as a cofactor.

The protein localises to the cytoplasm. It catalyses the reaction glycyl-[protein] + reduced [flavodoxin] + S-adenosyl-L-methionine = glycin-2-yl radical-[protein] + semiquinone [flavodoxin] + 5'-deoxyadenosine + L-methionine + H(+). In terms of biological role, activation of anaerobic ribonucleoside-triphosphate reductase under anaerobic conditions by generation of an organic free radical, using S-adenosylmethionine and reduced flavodoxin as cosubstrates to produce 5'-deoxy-adenosine. The polypeptide is Anaerobic ribonucleoside-triphosphate reductase-activating protein (nrdG) (Vibrio cholerae serotype O1 (strain ATCC 39315 / El Tor Inaba N16961)).